We begin with the raw amino-acid sequence, 85 residues long: Small ribosomal subunit protein bS20 (85 aa).

It belongs to the bacterial ribosomal protein bS20 family.

Its function is as follows. Binds directly to 16S ribosomal RNA. This is Small ribosomal subunit protein bS20 from Borrelia garinii subsp. bavariensis (strain ATCC BAA-2496 / DSM 23469 / PBi) (Borreliella bavariensis).